A 325-amino-acid polypeptide reads, in one-letter code: L-lactate dehydrogenase 1 (325 aa).

Residues Val-17, Asp-38, Lys-43, Tyr-68, and 82–83 (GA) contribute to the NAD(+) site. Substrate-binding positions include Gln-85, Arg-91, and 123–126 (NPVD). NAD(+)-binding positions include 121–123 (AAN) and Ser-146. 151–154 (DTAR) is a substrate binding site. The beta-D-fructose 1,6-bisphosphate site is built by Arg-156 and His-171. Catalysis depends on His-178, which acts as the Proton acceptor. Tyr-223 is subject to Phosphotyrosine. Thr-232 provides a ligand contact to substrate.

This sequence belongs to the LDH/MDH superfamily. LDH family. As to quaternary structure, homotetramer.

The protein resides in the cytoplasm. The enzyme catalyses (S)-lactate + NAD(+) = pyruvate + NADH + H(+). Its pathway is fermentation; pyruvate fermentation to lactate; (S)-lactate from pyruvate: step 1/1. Its activity is regulated as follows. Allosterically activated by fructose 1,6-bisphosphate (FBP). In terms of biological role, catalyzes the conversion of lactate to pyruvate. In Lactococcus lactis subsp. cremoris (Streptococcus cremoris), this protein is L-lactate dehydrogenase 1.